Reading from the N-terminus, the 479-residue chain is Polyadenylate-binding protein-interacting protein 1 (479 aa).

A disordered region spans residues 1-114 (MSDGFDRAPG…PQQNSESAMA (114 aa)). Ser-2 is subject to N-acetylalanine. Positions 11–33 (AGRGRSRGLGRGGGGPEGGGFPN) are enriched in gly residues. At Arg-21 the chain carries Omega-N-methylarginine. Residues 45–69 (PPQPKAPGFLQPPPLRQPRTTPPPG) show a composition bias toward pro residues. Positions 98 to 111 (PSSQDKIPQQNSES) are enriched in polar residues. A PABPC1-interacting motif-2 (PAM2) region spans residues 116-143 (PQVVVAPVLMSKLSVNAPEFYPSGYSSS). Positions 157-375 (TLSEYVQDFL…LLKLVELRSS (219 aa)) are PAIP1 middle domain (PAIP1M). The 218-residue stretch at 159–376 (SEYVQDFLNH…LKLVELRSSN (218 aa)) folds into the MIF4G domain. The interval 435-455 (DYEENGTDLSGAGDPYLDDID) is disordered. The interval 440–479 (GTDLSGAGDPYLDDIDDEMDPEIEEAYEKFCLESERKRKQ) is PABPC1-interacting motif-1 (PAM1).

In terms of assembly, interacts with the RRM1-RRM2 and C-terminus regions of PABPC1 in a 1:1 stoichiometry. Interacts with EIF4A. (Microbial infection) Interacts (via PAIP1M) with human SARS coronaviruses SARS-COV and SARS-COV-2 NSP3 protein (via SARS-unique domain); the interaction increases binding affinity with PABPC1.

The protein resides in the cytoplasm. Functionally, acts as a coactivator in the regulation of translation initiation of poly(A)-containing mRNAs. Its stimulatory activity on translation is mediated via its action on PABPC1. Competes with PAIP2 for binding to PABPC1. Its association with EIF4A and PABPC1 may potentiate contacts between mRNA termini. May also be involved in translationally coupled mRNA turnover. Implicated with other RNA-binding proteins in the cytoplasmic deadenylation/translational and decay interplay of the FOS mRNA mediated by the major coding-region determinant of instability (mCRD) domain. In terms of biological role, (Microbial infection) Upon interaction with SARS coronavirus SARS-CoV NSP3 protein, plays an important role in viral protein synthesis. In Homo sapiens (Human), this protein is Polyadenylate-binding protein-interacting protein 1.